The sequence spans 238 residues: 2-C-methyl-D-erythritol 4-phosphate cytidylyltransferase (238 aa).

This sequence belongs to the IspD/TarI cytidylyltransferase family. IspD subfamily.

The enzyme catalyses 2-C-methyl-D-erythritol 4-phosphate + CTP + H(+) = 4-CDP-2-C-methyl-D-erythritol + diphosphate. It functions in the pathway isoprenoid biosynthesis; isopentenyl diphosphate biosynthesis via DXP pathway; isopentenyl diphosphate from 1-deoxy-D-xylulose 5-phosphate: step 2/6. Catalyzes the formation of 4-diphosphocytidyl-2-C-methyl-D-erythritol from CTP and 2-C-methyl-D-erythritol 4-phosphate (MEP). The chain is 2-C-methyl-D-erythritol 4-phosphate cytidylyltransferase from Acinetobacter baumannii (strain AYE).